The sequence spans 107 residues: Small ribosomal subunit protein bS16 (107 aa).

The tract at residues 85–107 is disordered; it reads REARNNPEKAVPRKERKAAEAGK.

It belongs to the bacterial ribosomal protein bS16 family.

The polypeptide is Small ribosomal subunit protein bS16 (Rhodopseudomonas palustris (strain BisB5)).